A 598-amino-acid chain; its full sequence is Nicotinamide riboside transporter 1 (598 aa).

The next 11 helical transmembrane spans lie at 48 to 68 (LAYWGAVSFTAGTWMSGSAAL), 71 to 91 (GLSYPETIVSFLLGNVLTIIF), 112 to 132 (FVFGIYGSAFGIIIRILMSIV), 174 to 194 (LVGFIIFHVLTALCYFMKPYH), 197 to 217 (YLLIWSCVATCFAMLGIVIYL), 241 to 261 (AWAWVYMISYWFGSISPGSTN), 273 to 293 (LAIWTGSVCALLIPATLVPIF), 372 to 392 (GALFCACISWACLPWNFYNSS), 395 to 415 (FLTVMSSFGVVMTPIIAVMIC), 447 to 467 (AIVAWVCGMAPGLPGIAWEVN), and 484 to 504 (SFFSFLISFFVYWGLCVFFPF). A phosphoserine mark is found at serine 560 and serine 572.

The protein belongs to the purine-cytosine permease (2.A.39) family.

It is found in the cell membrane. In terms of biological role, high-affinity pH-dependent nicotinamide riboside transporter which also transports thiamine with low affinity. Involved in 5-fluorocytosine sensitivity. The sequence is that of Nicotinamide riboside transporter 1 (NRT1) from Saccharomyces cerevisiae (strain ATCC 204508 / S288c) (Baker's yeast).